Here is a 267-residue protein sequence, read N- to C-terminus: Tryptophan synthase alpha chain (267 aa).

Residues E49 and D60 each act as proton acceptor in the active site.

This sequence belongs to the TrpA family. In terms of assembly, tetramer of two alpha and two beta chains.

It catalyses the reaction (1S,2R)-1-C-(indol-3-yl)glycerol 3-phosphate + L-serine = D-glyceraldehyde 3-phosphate + L-tryptophan + H2O. It participates in amino-acid biosynthesis; L-tryptophan biosynthesis; L-tryptophan from chorismate: step 5/5. Functionally, the alpha subunit is responsible for the aldol cleavage of indoleglycerol phosphate to indole and glyceraldehyde 3-phosphate. The protein is Tryptophan synthase alpha chain of Pelobacter propionicus (strain DSM 2379 / NBRC 103807 / OttBd1).